A 98-amino-acid chain; its full sequence is Endoribonuclease antitoxin GhoS (98 aa).

Monomer. Unlike other TA antitoxins, this protein is stable.

Its function is as follows. Antitoxin component of a type V toxin-antitoxin (TA) system. Neutralizes the toxic effects of toxin GhoT by digesting ghoT transcripts in a sequence-specific manner. In concert with GhoT is involved in reducing cell growth during antibacterial stress. This is Endoribonuclease antitoxin GhoS from Escherichia coli O157:H7.